A 439-amino-acid polypeptide reads, in one-letter code: tRNA-2-methylthio-N(6)-dimethylallyladenosine synthase (439 aa).

In terms of domain architecture, MTTase N-terminal spans 2 to 119 (KKLYLKTHGC…LPDLLDSVIQ (118 aa)). Positions 11, 48, 82, 156, 160, and 163 each coordinate [4Fe-4S] cluster. The 233-residue stretch at 142-374 (RAEGPSAFVS…QNRINVKAAE (233 aa)) folds into the Radical SAM core domain. A TRAM domain is found at 377 to 439 (QSMVGTQQRI…RPYSLWGEIC (63 aa)).

This sequence belongs to the methylthiotransferase family. MiaB subfamily. Monomer. Requires [4Fe-4S] cluster as cofactor.

The protein localises to the cytoplasm. The catalysed reaction is N(6)-dimethylallyladenosine(37) in tRNA + (sulfur carrier)-SH + AH2 + 2 S-adenosyl-L-methionine = 2-methylsulfanyl-N(6)-dimethylallyladenosine(37) in tRNA + (sulfur carrier)-H + 5'-deoxyadenosine + L-methionine + A + S-adenosyl-L-homocysteine + 2 H(+). Catalyzes the methylthiolation of N6-(dimethylallyl)adenosine (i(6)A), leading to the formation of 2-methylthio-N6-(dimethylallyl)adenosine (ms(2)i(6)A) at position 37 in tRNAs that read codons beginning with uridine. The polypeptide is tRNA-2-methylthio-N(6)-dimethylallyladenosine synthase (Coxiella burnetii (strain Dugway 5J108-111)).